The following is a 438-amino-acid chain: Putative pectate lyase 14 (438 aa).

An N-terminal signal peptide occupies residues 1 to 26 (MVVARTLFSISATLIIFLALFLHVNA). N-linked (GlcNAc...) asparagine glycans are attached at residues Asn40, Asn46, and Asn73. Residues Asp236, Asp260, and Asp264 each coordinate Ca(2+). Arg316 is a catalytic residue.

This sequence belongs to the polysaccharide lyase 1 family. Ca(2+) serves as cofactor.

It catalyses the reaction Eliminative cleavage of (1-&gt;4)-alpha-D-galacturonan to give oligosaccharides with 4-deoxy-alpha-D-galact-4-enuronosyl groups at their non-reducing ends.. The protein operates within glycan metabolism; pectin degradation; 2-dehydro-3-deoxy-D-gluconate from pectin: step 2/5. The polypeptide is Putative pectate lyase 14 (Arabidopsis thaliana (Mouse-ear cress)).